The following is a 251-amino-acid chain: Phosphate import ATP-binding protein PstB 2 (251 aa).

The ABC transporter domain occupies 5-246 (ISAKDVHLSY…PKKQITSDYL (242 aa)). 37 to 44 (GPSGCGKS) lines the ATP pocket.

The protein belongs to the ABC transporter superfamily. Phosphate importer (TC 3.A.1.7) family. The complex is composed of two ATP-binding proteins (PstB), two transmembrane proteins (PstC and PstA) and a solute-binding protein (PstS).

Its subcellular location is the cell membrane. It catalyses the reaction phosphate(out) + ATP + H2O = ADP + 2 phosphate(in) + H(+). In terms of biological role, part of the ABC transporter complex PstSACB involved in phosphate import. Responsible for energy coupling to the transport system. The chain is Phosphate import ATP-binding protein PstB 2 from Lactobacillus acidophilus (strain ATCC 700396 / NCK56 / N2 / NCFM).